Reading from the N-terminus, the 584-residue chain is uncharacterized protein (584 aa).

PbH1 repeat units lie at residues 100–128 (QENITISGGQIIGERDEHTYASAGIRSTH), 139–161 (CSNVVIDDVKISDFTGDGIIVSP), 173–195 (SEQIIIRRCEVRRSRRNNISITG), 196–225 (CDMVTVEECLIEDAGTGNGTAPKFGIDIEG), 236–266 (PINVSIRNNHFVGNVSSSVTNFNGYGILIEG), 313–333 (TSDAVIAGNLITGFSTGIDVR), 334–356 (GKSVLVTNNKISNFENTGILVYQ), 357–382 (SSDVKVDGNQIQNGLSETRRSIGLRA), 406–427 (GGNMIIKDNLLRKFSRGIWIAQ), 456–478 (NAGAIIKNNTFKEFKNYPIYCST), and 529–554 (SAGSIISGNTINNLSAGTATAIQTNT).

This is an uncharacterized protein from Bacillus subtilis (strain 168).